The chain runs to 149 residues: Ribosome-binding factor A (149 aa).

Over residues 116–125 the composition is skewed to basic and acidic residues; sequence TLFEELHPNP. A disordered region spans residues 116–149; sequence TLFEELHPNPEEDDGDTDAETLLEDSESGIERET. Positions 126–143 are enriched in acidic residues; that stretch reads EEDDGDTDAETLLEDSES.

The protein belongs to the RbfA family. As to quaternary structure, monomer. Binds 30S ribosomal subunits, but not 50S ribosomal subunits or 70S ribosomes.

It localises to the cytoplasm. Functionally, one of several proteins that assist in the late maturation steps of the functional core of the 30S ribosomal subunit. Associates with free 30S ribosomal subunits (but not with 30S subunits that are part of 70S ribosomes or polysomes). Required for efficient processing of 16S rRNA. May interact with the 5'-terminal helix region of 16S rRNA. The chain is Ribosome-binding factor A from Leptospira biflexa serovar Patoc (strain Patoc 1 / Ames).